The sequence spans 220 residues: Glycerol-3-phosphate acyltransferase (220 aa).

5 consecutive transmembrane segments (helical) span residues 4-24 (LTILMIILAYLGGSLSSAVLV), 53-73 (VAALVVLLLDVLKGTAPVYLA), 80-100 (PVYLGFIGVAACLGHMYPIFF), 116-136 (MPIGFTMGGAVIGTWLVVLLV), and 138-158 (GYSSLASIITVLLSPLFTYLI). The interval 193 to 220 (WGRQAQRRQEEVGEMDDVAQKRDERDKK) is disordered. Basic and acidic residues predominate over residues 210-220 (VAQKRDERDKK).

The protein belongs to the PlsY family. In terms of assembly, probably interacts with PlsX.

The protein localises to the cell inner membrane. It catalyses the reaction an acyl phosphate + sn-glycerol 3-phosphate = a 1-acyl-sn-glycero-3-phosphate + phosphate. It functions in the pathway lipid metabolism; phospholipid metabolism. In terms of biological role, catalyzes the transfer of an acyl group from acyl-phosphate (acyl-PO(4)) to glycerol-3-phosphate (G3P) to form lysophosphatidic acid (LPA). This enzyme utilizes acyl-phosphate as fatty acyl donor, but not acyl-CoA or acyl-ACP. This Aeromonas salmonicida (strain A449) protein is Glycerol-3-phosphate acyltransferase.